The chain runs to 121 residues: Small ribosomal subunit protein bS6 (121 aa).

Belongs to the bacterial ribosomal protein bS6 family.

In terms of biological role, binds together with bS18 to 16S ribosomal RNA. This chain is Small ribosomal subunit protein bS6, found in Rickettsia felis (strain ATCC VR-1525 / URRWXCal2) (Rickettsia azadi).